Here is a 116-residue protein sequence, read N- to C-terminus: MFRSFMLAFQKACRQVHKQYLNKYYSVITYFLAFLTKFAILLESFTPFVSTPPLTSTPITPFNLSASPTFSGVSPPANIKCKLSGLSCLPTQSEIEFQSKSSPVPPASESNKGINE.

The chain crosses the membrane as a helical span at residues 20–42; it reads YLNKYYSVITYFLAFLTKFAILL. The segment at 95–116 is disordered; the sequence is IEFQSKSSPVPPASESNKGINE.

The protein resides in the membrane. This is an uncharacterized protein from Saccharomyces cerevisiae (strain ATCC 204508 / S288c) (Baker's yeast).